The chain runs to 440 residues: tRNA(Ile)-lysidine synthase (440 aa).

29–34 (SGGLDS) lines the ATP pocket.

It belongs to the tRNA(Ile)-lysidine synthase family.

It is found in the cytoplasm. The catalysed reaction is cytidine(34) in tRNA(Ile2) + L-lysine + ATP = lysidine(34) in tRNA(Ile2) + AMP + diphosphate + H(+). Its function is as follows. Ligates lysine onto the cytidine present at position 34 of the AUA codon-specific tRNA(Ile) that contains the anticodon CAU, in an ATP-dependent manner. Cytidine is converted to lysidine, thus changing the amino acid specificity of the tRNA from methionine to isoleucine. The protein is tRNA(Ile)-lysidine synthase of Pectobacterium atrosepticum (strain SCRI 1043 / ATCC BAA-672) (Erwinia carotovora subsp. atroseptica).